The chain runs to 600 residues: DNA mismatch repair protein MutL (600 aa).

The protein belongs to the DNA mismatch repair MutL/HexB family.

Functionally, this protein is involved in the repair of mismatches in DNA. It is required for dam-dependent methyl-directed DNA mismatch repair. May act as a 'molecular matchmaker', a protein that promotes the formation of a stable complex between two or more DNA-binding proteins in an ATP-dependent manner without itself being part of a final effector complex. This Rickettsia typhi (strain ATCC VR-144 / Wilmington) protein is DNA mismatch repair protein MutL.